The chain runs to 1051 residues: Kinesin-like protein KIN-4B (1051 aa).

Residues 1–21 (MESHSSLSSSSSSSPPSSLSS) form a disordered region. The Kinesin motor domain maps to 25 to 380 (CVKVAVNVRP…LKYANRARNI (356 aa)). 104–111 (GQTGSGKT) serves as a coordination point for ATP. Coiled coils occupy residues 414–448 (ATSS…RSKR) and 540–644 (RQHF…KMKQ). The segment covering 916–925 (SSSYSGSSRS) has biased composition (low complexity). Disordered stretches follow at residues 916–946 (SSSY…SSTY) and 1029–1051 (MSKS…FQGA).

It belongs to the TRAFAC class myosin-kinesin ATPase superfamily. Kinesin family. KIN-4 subfamily. As to quaternary structure, homodimer.

Functionally, kinesin-like motor protein involved in the control of the oriented deposition of cellulose microfibrils. The protein is Kinesin-like protein KIN-4B of Arabidopsis thaliana (Mouse-ear cress).